The chain runs to 296 residues: Protoheme IX farnesyltransferase (296 aa).

Over 1 to 9 the chain is Cytoplasmic; the sequence is MMFKQYLQV. Residues 10–28 traverse the membrane as a helical segment; it reads TKPGIIFGNLISVIGGFLL. At 29 to 37 the chain is on the periplasmic side; it reads ASKGSIDYP. Residues 38 to 56 form a helical membrane-spanning segment; the sequence is LFIYTLVGVSLVVASGCVF. Topologically, residues 57 to 78 are cytoplasmic; sequence NNYIDRDIDRKMERTKNRVLVK. A helical transmembrane segment spans residues 79 to 97; it reads GLISPAVSLVYATLLGIAG. The Periplasmic portion of the chain corresponds to 98–107; sequence FMLLWFGANP. A helical membrane pass occupies residues 108–126; it reads LACWLGVMGFVVYVGVYSL. At 127–197 the chain is on the cytoplasmic side; it reads YMKRHSVYGT…YQAANIPVLP (71 aa). The helical transmembrane segment at 198-216 threads the bilayer; the sequence is VVKGISVAKNHITLYIIAF. Residues 217–228 are Periplasmic-facing; that stretch reads AVATLMLSLGGY. The helical transmembrane segment at 229–247 threads the bilayer; it reads AGYKYLVVAAAVSVWWLGM. Residues 248 to 268 are Cytoplasmic-facing; it reads ALRGYKVADDRIWARKLFGFS. Residues 269–287 form a helical membrane-spanning segment; sequence IIAITALSVMMSVDFMVPD. Residues 288–296 are Periplasmic-facing; it reads SHTLLAAVW.

Belongs to the UbiA prenyltransferase family. Protoheme IX farnesyltransferase subfamily.

It is found in the cell inner membrane. It carries out the reaction heme b + (2E,6E)-farnesyl diphosphate + H2O = Fe(II)-heme o + diphosphate. It participates in porphyrin-containing compound metabolism; heme O biosynthesis; heme O from protoheme: step 1/1. In terms of biological role, converts heme B (protoheme IX) to heme O by substitution of the vinyl group on carbon 2 of heme B porphyrin ring with a hydroxyethyl farnesyl side group. This chain is Protoheme IX farnesyltransferase, found in Shigella flexneri.